The following is a 380-amino-acid chain: Succinyl-diaminopimelate desuccinylase (380 aa).

Residue His-71 coordinates Zn(2+). Asp-73 is a catalytic residue. Asp-104 contributes to the Zn(2+) binding site. Glu-136 acts as the Proton acceptor in catalysis. 3 residues coordinate Zn(2+): Glu-137, Glu-166, and His-351.

Belongs to the peptidase M20A family. DapE subfamily. Homodimer. Zn(2+) is required as a cofactor. It depends on Co(2+) as a cofactor.

It catalyses the reaction N-succinyl-(2S,6S)-2,6-diaminopimelate + H2O = (2S,6S)-2,6-diaminopimelate + succinate. It participates in amino-acid biosynthesis; L-lysine biosynthesis via DAP pathway; LL-2,6-diaminopimelate from (S)-tetrahydrodipicolinate (succinylase route): step 3/3. Catalyzes the hydrolysis of N-succinyl-L,L-diaminopimelic acid (SDAP), forming succinate and LL-2,6-diaminopimelate (DAP), an intermediate involved in the bacterial biosynthesis of lysine and meso-diaminopimelic acid, an essential component of bacterial cell walls. In Ehrlichia canis (strain Jake), this protein is Succinyl-diaminopimelate desuccinylase.